We begin with the raw amino-acid sequence, 186 residues long: Imidazoleglycerol-phosphate dehydratase (186 aa).

The protein belongs to the imidazoleglycerol-phosphate dehydratase family.

It is found in the cytoplasm. It carries out the reaction D-erythro-1-(imidazol-4-yl)glycerol 3-phosphate = 3-(imidazol-4-yl)-2-oxopropyl phosphate + H2O. It functions in the pathway amino-acid biosynthesis; L-histidine biosynthesis; L-histidine from 5-phospho-alpha-D-ribose 1-diphosphate: step 6/9. In Dictyoglomus turgidum (strain DSM 6724 / Z-1310), this protein is Imidazoleglycerol-phosphate dehydratase.